The chain runs to 404 residues: L-cysteine:1D-myo-inositol 2-amino-2-deoxy-alpha-D-glucopyranoside ligase (404 aa).

Position 32 (Cys-32) interacts with Zn(2+). Residues 32–35, Thr-47, and 70–72 each bind L-cysteinyl-5'-AMP; these read CGIT and NIT. The 'HIGH' region motif lies at 34 to 44; the sequence is ITPYDSTHLGH. The short motif at 176–181 is the 'ERGGDP' region element; the sequence is ERGGDP. Residue Trp-216 participates in L-cysteinyl-5'-AMP binding. Cys-220 contributes to the Zn(2+) binding site. 238–240 serves as a coordination point for L-cysteinyl-5'-AMP; that stretch reads GSD. His-245 lines the Zn(2+) pocket. Ile-272 lines the L-cysteinyl-5'-AMP pocket. Residues 278 to 282 carry the 'KMSKS' region motif; sequence KMSKS.

It belongs to the class-I aminoacyl-tRNA synthetase family. MshC subfamily. Monomer. It depends on Zn(2+) as a cofactor.

It catalyses the reaction 1D-myo-inositol 2-amino-2-deoxy-alpha-D-glucopyranoside + L-cysteine + ATP = 1D-myo-inositol 2-(L-cysteinylamino)-2-deoxy-alpha-D-glucopyranoside + AMP + diphosphate + H(+). Functionally, catalyzes the ATP-dependent condensation of GlcN-Ins and L-cysteine to form L-Cys-GlcN-Ins. In Corynebacterium glutamicum (strain ATCC 13032 / DSM 20300 / JCM 1318 / BCRC 11384 / CCUG 27702 / LMG 3730 / NBRC 12168 / NCIMB 10025 / NRRL B-2784 / 534), this protein is L-cysteine:1D-myo-inositol 2-amino-2-deoxy-alpha-D-glucopyranoside ligase (mshC).